A 122-amino-acid polypeptide reads, in one-letter code: Large ribosomal subunit protein uL14 (122 aa).

This sequence belongs to the universal ribosomal protein uL14 family. In terms of assembly, part of the 50S ribosomal subunit. Forms a cluster with proteins L3 and L19. In the 70S ribosome, L14 and L19 interact and together make contacts with the 16S rRNA in bridges B5 and B8.

Its function is as follows. Binds to 23S rRNA. Forms part of two intersubunit bridges in the 70S ribosome. The chain is Large ribosomal subunit protein uL14 from Oenococcus oeni (strain ATCC BAA-331 / PSU-1).